The sequence spans 216 residues: Transmembrane protein 125 (216 aa).

Transmembrane regions (helical) follow at residues 32-52, 65-85, 111-131, and 144-164; these read LLCF…GVAL, LAVG…QLMS, AVVV…LAGL, and MLSV…GLLL.

It localises to the membrane. This Mus musculus (Mouse) protein is Transmembrane protein 125 (Tmem125).